The sequence spans 152 residues: Small integral membrane protein 28 (152 aa).

The helical transmembrane segment at 52–72 (FLCILLPATILLFLAFLLLFL) threads the bilayer. The segment at 117-152 (PLPPEATLPSQCLPPSYEEATRNPPGEEAQGCSPSV) is disordered.

Its subcellular location is the membrane. The protein is Small integral membrane protein 28 of Homo sapiens (Human).